The primary structure comprises 441 residues: 5-hydroxytryptamine receptor 3B (441 aa).

A signal peptide spans 1–21 (MLSSVMAPLWACILVAAGILA). At 22–238 (TDTHHPQDSA…IQFNVVMRRH (217 aa)) the chain is on the extracellular side. N-linked (GlcNAc...) asparagine glycans are attached at residues Asn-52, Asn-96, Asn-138, Asn-168, and Asn-203. Cysteines 155 and 169 form a disulfide. Residues 239–259 (PLVYVVSLLIPSIFLMLVDLG) form a helical membrane-spanning segment. The Cytoplasmic portion of the chain corresponds to 260–268 (SFYLPPNCR). A helical membrane pass occupies residues 269-286 (ARIVFKTSVLVGYTVFRV). An N-linked (GlcNAc...) asparagine glycan is attached at Asn-287. Residues 287 to 303 (NMSNQVPRSVGSTPLIG) are Extracellular-facing. The helical transmembrane segment at 304-324 (HFFTICMAFLVLSLAKSIVLV) threads the bilayer. Residues 325 to 414 (KFLHDEQRGG…WLVLLSRFDR (90 aa)) are Cytoplasmic-facing. The segment at 381–413 (VWSQLQSISNYLQTQDQTDQQEAEWLVLLSRFD) is HA-stretch; determines single-channel conductance in 5-HT3 receptors. A helical transmembrane segment spans residues 415–435 (LLFQSYLFMLGIYTITLCSLW). The Extracellular segment spans residues 436–441 (ALWGGV).

It belongs to the ligand-gated ion channel (TC 1.A.9) family. 5-hydroxytryptamine receptor (TC 1.A.9.2) subfamily. HTR3B sub-subfamily. In terms of assembly, forms homopentameric as well as heteropentameric serotonin-activated cation-selective channel complexes with HTR3A. The homomeric complex is not functional. Heteropentameric complexes display properties which resemble that of neuronal serotonin-activated channels in vivo. Post-translationally, N-glycosylation required for membrane localization. Expressed in the brain cortex, in the caudate nucleus, the hippocampus, the thalamus and the amygdala. Detected in the kidney and testis as well as in monocytes of the spleen, small and large intestine, uterus, prostate, ovary and placenta.

Its subcellular location is the postsynaptic cell membrane. It is found in the cell membrane. The catalysed reaction is Na(+)(in) = Na(+)(out). It carries out the reaction K(+)(in) = K(+)(out). It catalyses the reaction Ca(2+)(in) = Ca(2+)(out). Forms serotonin (5-hydroxytryptamine/5-HT3)-activated cation-selective channel complexes, which when activated cause fast, depolarizing responses in neurons. The polypeptide is 5-hydroxytryptamine receptor 3B (Homo sapiens (Human)).